The sequence spans 65 residues: Large ribosomal subunit protein bL35 (65 aa).

A disordered region spans residues 1-25 (MPKMKSHRGAAKRFKKTGTGKLKRA).

The protein belongs to the bacterial ribosomal protein bL35 family.

The polypeptide is Large ribosomal subunit protein bL35 (Clostridium botulinum (strain Alaska E43 / Type E3)).